Here is a 782-residue protein sequence, read N- to C-terminus: U-box domain-containing protein 7 (782 aa).

Positions 271-345 (VPPEELRCPI…ASWCEQNGTQ (75 aa)) constitute a U-box domain. ARM repeat units follow at residues 456–499 (EEAR…NLAV), 502–541 (NRNK…SCLD), 542–581 (EAKS…NLST), 583–623 (SPNI…NLAS), and 626–665 (EGKD…ILCN). Over residues 707-729 (EERQQRDQPSSNRDEPPQKEPAR) the composition is skewed to basic and acidic residues. The disordered stretch occupies residues 707–765 (EERQQRDQPSSNRDEPPQKEPARKSLSAPLSVHGSTPASASVQDYEPRVLSKSMSRRKS). A compositionally biased stretch (polar residues) spans 739–748 (HGSTPASASV).

The catalysed reaction is S-ubiquitinyl-[E2 ubiquitin-conjugating enzyme]-L-cysteine + [acceptor protein]-L-lysine = [E2 ubiquitin-conjugating enzyme]-L-cysteine + N(6)-ubiquitinyl-[acceptor protein]-L-lysine.. The protein operates within protein modification; protein ubiquitination. In terms of biological role, functions as an E3 ubiquitin ligase. This Arabidopsis thaliana (Mouse-ear cress) protein is U-box domain-containing protein 7 (PUB7).